Consider the following 975-residue polypeptide: MKLEHPDRLMNRTPLSLAALETHDAFAERHIGPDAASQQAMLDTLGFATRAALIDAVIPASIRRAETLPLGPFAQPKSEAEALAALRALADKNQVFRSYIGQGYYNTHTPAVILRNVLENPAWYTAYTPYQPEISQGRLEALLNFQQMVADLTGLEISNASLLDEATAAAEAMTLLQRVGKPQSNVFYVADDVLPQTLEVIKTRAKPIGIEVKSGPAADAAAANAFGVLLQYPGANGDVRDYRALADAIHAAGGHVVVAADILALTVLMPPGEWGADVAVGNTQRFGVPMGFGGPHAAYMAVRDEFKRQMPGRLVGVTVDAQGKPALRLALQTREQHIRREKATSNVCTAQALLAIMASMYAVYHGPRGLKTIALRVNRIAALLAAGIRHLGYATVNDTFFDTLTIDTGARTAQLHAFAQAKRINLRRAGDTRVGVSVDETTTRADLADLLTIFAQAAGATAPDIDALDAGLLPAPALPPSLERTSAYLTHHVFNRHHSETEMLRYLRSLSDKDLALDRSMIPLGSCTMKLNATSEMLPVTWPEFGRIHPFAPAEQTVGYREMIDQLEQMLVAATGYAAVSLQPNAGSQGEYAGLLIIHAYHESRGESHRDVCLIPASAHGTNPASAHMAGMKVVVVACDAQGNVDIADLKAKADAHSHDLAAIMITYPSTHGVFEQNVREICEIVHAHGGQVYVDGANMNAMVGLTAPGQFGGDVSHLNLHKTFCIPHGGGGPGVGPVAVGPHLAKFLPNQRSTGYARGEDGIGAVSAAPYGSASILPISWMYIAMMGAKNLTAATETAILNANYIAKRLAPHYPVLYSGPGGLVAHECILDLRPIKDSSGITVDDVAKRLMDYGFHAPTMSFPVPGTLMVEPTESESQEELDRFIAAMIAIRDEIRAVEEGRADREDNPLRHAPHTAAVVTANEWPHAYSREQAAFPVASLVANKYWPPVGRADNAYGDRNLFCSCVPVSDYA.

K723 carries the post-translational modification N6-(pyridoxal phosphate)lysine.

It belongs to the GcvP family. As to quaternary structure, the glycine cleavage system is composed of four proteins: P, T, L and H. Pyridoxal 5'-phosphate serves as cofactor.

The catalysed reaction is N(6)-[(R)-lipoyl]-L-lysyl-[glycine-cleavage complex H protein] + glycine + H(+) = N(6)-[(R)-S(8)-aminomethyldihydrolipoyl]-L-lysyl-[glycine-cleavage complex H protein] + CO2. The glycine cleavage system catalyzes the degradation of glycine. The P protein binds the alpha-amino group of glycine through its pyridoxal phosphate cofactor; CO(2) is released and the remaining methylamine moiety is then transferred to the lipoamide cofactor of the H protein. This chain is Glycine dehydrogenase (decarboxylating), found in Burkholderia pseudomallei (strain 668).